The chain runs to 307 residues: Ribosomal RNA small subunit methyltransferase H (307 aa).

Residues 33–35, D52, L83, D97, and Q104 contribute to the S-adenosyl-L-methionine site; that span reads GGH.

Belongs to the methyltransferase superfamily. RsmH family.

The protein localises to the cytoplasm. The enzyme catalyses cytidine(1402) in 16S rRNA + S-adenosyl-L-methionine = N(4)-methylcytidine(1402) in 16S rRNA + S-adenosyl-L-homocysteine + H(+). In terms of biological role, specifically methylates the N4 position of cytidine in position 1402 (C1402) of 16S rRNA. This chain is Ribosomal RNA small subunit methyltransferase H, found in Campylobacter fetus subsp. fetus (strain 82-40).